The sequence spans 379 residues: MKKAFISVGEISGDNYASQLVKALPDFMWVGITGPKMREAGVETVEKLENISVVGLMEALPKYFKIKETFKRSVEILDKGIDLLVVVDFPGFNLKLLKEAKKRGIKTVYFIAPQVWAWGKGRIPKIAQYTDLLIAIWPFEKEIYTDYISDSFRVEYVGHPILDIIKTEETEESFKEKIGIEKDKKIFGLLPGSRESEVKTLLPILLSSAEIIYRKREDLHFVIPSTPNMEENVKQIAGSKKVPLSVITVKDFRHPSYEVMKHSVFLNVASGTATLETAIFGNPFLLVYKVSPVTFFIGKMLVSIDYLGLPNIIAGREIIKELLQKECNPESIARWSLRYLEDPEVYERTKNDLEKVKKALGEKGAIKRSADLIKELSLS.

Belongs to the LpxB family.

It carries out the reaction a lipid X + a UDP-2-N,3-O-bis[(3R)-3-hydroxyacyl]-alpha-D-glucosamine = a lipid A disaccharide + UDP + H(+). It functions in the pathway bacterial outer membrane biogenesis; LPS lipid A biosynthesis. In terms of biological role, condensation of UDP-2,3-diacylglucosamine and 2,3-diacylglucosamine-1-phosphate to form lipid A disaccharide, a precursor of lipid A, a phosphorylated glycolipid that anchors the lipopolysaccharide to the outer membrane of the cell. The polypeptide is Lipid-A-disaccharide synthase (Persephonella marina (strain DSM 14350 / EX-H1)).